The following is a 309-amino-acid chain: Aspartate carbamoyltransferase catalytic subunit (309 aa).

Positions 55 and 56 each coordinate carbamoyl phosphate. Position 85 (Lys-85) interacts with L-aspartate. Residues Arg-106, His-135, and Gln-138 each coordinate carbamoyl phosphate. Residues Arg-168 and Arg-230 each coordinate L-aspartate. Carbamoyl phosphate-binding residues include Leu-268 and Pro-269.

Belongs to the aspartate/ornithine carbamoyltransferase superfamily. ATCase family. In terms of assembly, heterododecamer (2C3:3R2) of six catalytic PyrB chains organized as two trimers (C3), and six regulatory PyrI chains organized as three dimers (R2).

The catalysed reaction is carbamoyl phosphate + L-aspartate = N-carbamoyl-L-aspartate + phosphate + H(+). Its pathway is pyrimidine metabolism; UMP biosynthesis via de novo pathway; (S)-dihydroorotate from bicarbonate: step 2/3. Its function is as follows. Catalyzes the condensation of carbamoyl phosphate and aspartate to form carbamoyl aspartate and inorganic phosphate, the committed step in the de novo pyrimidine nucleotide biosynthesis pathway. In Vibrio vulnificus (strain CMCP6), this protein is Aspartate carbamoyltransferase catalytic subunit.